The following is a 232-amino-acid chain: MSSDIHQIKIGLTDNHPCSYLPERKERVAVALEADMHTADNYEVLLANGFRRSGNTIYKPHCDSCHSCQPIRISVPDIELSRSQKRLLAKARSLSWSMKRNMDENWFDLYSRYIVARHRNGTMYPPKKDDFAHFSRNQWLTTQFLHIYEGQRLIAVAVTDIMDHCASAFYTFFEPEHELSLGTLAVLFQLEYCQEEKKQWLYLGYQIDECPAMNYKVRFHRHQKLVNQRWQG.

Belongs to the R-transferase family. Bpt subfamily.

Its subcellular location is the cytoplasm. The catalysed reaction is N-terminal L-glutamyl-[protein] + L-leucyl-tRNA(Leu) = N-terminal L-leucyl-L-glutamyl-[protein] + tRNA(Leu) + H(+). The enzyme catalyses N-terminal L-aspartyl-[protein] + L-leucyl-tRNA(Leu) = N-terminal L-leucyl-L-aspartyl-[protein] + tRNA(Leu) + H(+). Its function is as follows. Functions in the N-end rule pathway of protein degradation where it conjugates Leu from its aminoacyl-tRNA to the N-termini of proteins containing an N-terminal aspartate or glutamate. In Vibrio vulnificus (strain YJ016), this protein is Aspartate/glutamate leucyltransferase.